The following is a 421-amino-acid chain: Immunoglobulin heavy constant epsilon (421 aa).

Ig-like domains follow at residues proline 5 to threonine 97, proline 99 to serine 184, proline 201 to threonine 301, and proline 310 to serine 410. Cysteines 23 and 75 form a disulfide. N-linked (GlcNAc...) asparagine glycosylation is found at asparagine 43, asparagine 72, asparagine 84, asparagine 95, asparagine 166, asparagine 238, asparagine 261, asparagine 365, and asparagine 415. Intrachain disulfides connect cysteine 121/cysteine 180, cysteine 226/cysteine 285, and cysteine 330/cysteine 392.

As to quaternary structure, the basic structural unit consists of two identical heavy chains and two identical light chains; disulfide-linked. N-terminal variable regions of the heavy and light chains form the antigen binding sites, whereas the C-terminal constant regions of the heavy chains interact with immune receptors to mediate effector functions.

It localises to the secreted. It is found in the cell membrane. Its function is as follows. Constant region of immunoglobulin heavy chains. Immunoglobulins, also known as antibodies, are membrane-bound or secreted glycoproteins produced by B lymphocytes. In the recognition phase of humoral immunity, the membrane-bound immunoglobulins serve as receptors which, upon binding of a specific antigen, trigger the clonal expansion and differentiation of B lymphocytes into immunoglobulins-secreting plasma cells. Secreted immunoglobulins mediate the effector phase of humoral immunity, which results in the elimination of bound antigens. The antigen binding site is formed by the variable domain of one heavy chain, together with that of its associated light chain. Thus, each immunoglobulin has two antigen binding sites with remarkable affinity for a particular antigen. The variable domains are assembled by a process called V-(D)-J rearrangement and can then be subjected to somatic hypermutations which, after exposure to antigen and selection, allow affinity maturation for a particular antigen. The polypeptide is Immunoglobulin heavy constant epsilon (Mus musculus (Mouse)).